A 329-amino-acid chain; its full sequence is Phenylalanine--tRNA ligase alpha subunit (329 aa).

The protein belongs to the class-II aminoacyl-tRNA synthetase family. Phe-tRNA synthetase alpha subunit type 1 subfamily. Tetramer of two alpha and two beta subunits. The cofactor is Mg(2+).

It is found in the cytoplasm. It carries out the reaction tRNA(Phe) + L-phenylalanine + ATP = L-phenylalanyl-tRNA(Phe) + AMP + diphosphate + H(+). This is Phenylalanine--tRNA ligase alpha subunit (pheS) from Buchnera aphidicola subsp. Schizaphis graminum (strain Sg).